Here is a 322-residue protein sequence, read N- to C-terminus: NADH-ubiquinone oxidoreductase chain 1 (322 aa).

8 consecutive transmembrane segments (helical) span residues 4-24 (VFSI…VAFL), 73-93 (YLFF…WNFM), 106-126 (LLLV…SGWA), 150-170 (LALI…TYIM), 175-195 (FSWF…STLA), 224-244 (FVLF…FSVV), 257-277 (FPIS…VLWV), and 302-322 (IGAL…LPLF).

Belongs to the complex I subunit 1 family.

The protein resides in the mitochondrion inner membrane. It carries out the reaction a ubiquinone + NADH + 5 H(+)(in) = a ubiquinol + NAD(+) + 4 H(+)(out). Functionally, core subunit of the mitochondrial membrane respiratory chain NADH dehydrogenase (Complex I) that is believed to belong to the minimal assembly required for catalysis. Complex I functions in the transfer of electrons from NADH to the respiratory chain. The immediate electron acceptor for the enzyme is believed to be ubiquinone. In Strongylocentrotus purpuratus (Purple sea urchin), this protein is NADH-ubiquinone oxidoreductase chain 1 (ND1).